The primary structure comprises 249 residues: Cobalt transport protein CbiM (249 aa).

Positions Met1–Ala27 are cleaved as a signal peptide. Transmembrane regions (helical) follow at residues Gly33–Leu53, Leu70–Val90, Leu102–Phe122, Thr134–Trp154, Ala161–Val181, and Ile207–Phe227.

It belongs to the CbiM family. In terms of assembly, forms an energy-coupling factor (ECF) transporter complex composed of an ATP-binding protein (A component, CbiO), a transmembrane protein (T component, CbiQ) and 2 possible substrate-capture proteins (S components, CbiM and CbiN) of unknown stoichimetry.

The protein localises to the cell membrane. Its pathway is cofactor biosynthesis; adenosylcobalamin biosynthesis. Part of the energy-coupling factor (ECF) transporter complex CbiMNOQ involved in cobalt import. The polypeptide is Cobalt transport protein CbiM (Roseiflexus sp. (strain RS-1)).